A 50-amino-acid chain; its full sequence is Sperm protamine P1 (50 aa).

This sequence belongs to the protamine P1 family. Cross-linked by interchain disulfide bonds around the DNA-helix. As to expression, testis.

The protein localises to the nucleus. The protein resides in the chromosome. In terms of biological role, protamines substitute for histones in the chromatin of sperm during the haploid phase of spermatogenesis. They compact sperm DNA into a highly condensed, stable and inactive complex. The polypeptide is Sperm protamine P1 (PRM1) (Saimiri sciureus (Common squirrel monkey)).